A 736-amino-acid polypeptide reads, in one-letter code: Catalase-peroxidase 2 (736 aa).

A signal peptide spans 1–23; that stretch reads MIKKTLPVLILLALSGSFSTAVA. Positions 102–223 form a cross-link, tryptophyl-tyrosyl-methioninium (Trp-Tyr) (with M-249); it reads WHGAGTYRTY…LAATQMGLIY (122 aa). H103 serves as the catalytic Proton acceptor. The segment at residues 223-249 is a cross-link (tryptophyl-tyrosyl-methioninium (Tyr-Met) (with W-102)); the sequence is YVNPEGPGGKPDPLASAKDIREAFSRM. H264 lines the heme b pocket.

It belongs to the peroxidase family. Peroxidase/catalase subfamily. In terms of assembly, homodimer or homotetramer. The cofactor is heme b. In terms of processing, formation of the three residue Trp-Tyr-Met cross-link is important for the catalase, but not the peroxidase activity of the enzyme.

The protein localises to the periplasm. The catalysed reaction is H2O2 + AH2 = A + 2 H2O. It carries out the reaction 2 H2O2 = O2 + 2 H2O. Its function is as follows. Bifunctional enzyme with both catalase and broad-spectrum peroxidase activity. This chain is Catalase-peroxidase 2, found in Escherichia coli O157:H7.